The primary structure comprises 118 residues: p-cumate 2,3-dioxygenase system, ferredoxin component (118 aa).

One can recognise a Rieske domain in the interval 14–111 (VGLCATDDVA…VTVEGGQIFV (98 aa)). Residues C54, H56, C74, and H77 each coordinate [2Fe-2S] cluster.

Belongs to the bacterial ring-hydroxylating dioxygenase ferredoxin component family. In terms of assembly, the p-cumate 2,3-dioxygenase multicomponent enzyme system is composed of an electron transfer component and a dioxygenase component (iron sulfur protein (ISP)). The electron transfer component is composed of a ferredoxin reductase (CmtAa) and a ferredoxin (CmtAd), and the dioxygenase component is formed of a large alpha subunit (CmtAb) and a small beta subunit (CmtAc). [2Fe-2S] cluster is required as a cofactor.

Its pathway is aromatic compound metabolism; p-cumate degradation; acetaldehyde and pyruvate from p-cumate. In terms of biological role, component of the p-cumate 2,3-dioxygenase multicomponent enzyme system which catalyzes the incorporation of both atoms of molecular oxygen into p-cumate to form cis-2,3-dihydroxy-2,3-dihydro-p-cumate. Functions as an intermediate electron transfer protein via a specific interaction with iron sulfur protein components (ISP)(CmtAb and CmtAc). This Pseudomonas putida (Arthrobacter siderocapsulatus) protein is p-cumate 2,3-dioxygenase system, ferredoxin component.